Reading from the N-terminus, the 835-residue chain is Beta-galactosidase (835 aa).

Positions 1–22 (MGFWMAMLLMLLLCLWVSCGIA) are cleaved as a signal peptide. Catalysis depends on E180, which acts as the Proton donor. E249 serves as the catalytic Nucleophile. Residues 749 to 835 (RPLRPKAHLK…KKLSVEAICS (87 aa)) enclose the SUEL-type lectin domain.

Belongs to the glycosyl hydrolase 35 family.

The enzyme catalyses Hydrolysis of terminal non-reducing beta-D-galactose residues in beta-D-galactosides.. Functionally, involved in cell wall degradation. Degrades polysaccharides containing beta-(1--&gt;4)-linked galactans, acting as an exo-(1--&gt;4)-beta-D-galactanase. In Solanum lycopersicum (Tomato), this protein is Beta-galactosidase.